The primary structure comprises 169 residues: MGTGDPGGAPRLTHFDEHGNAAMVDVSAKAETERVATAEALVSMRPETFALIESGGIAKGDVLGVARIAGIMAAKRTADLIPLCHPLALSRVAVDFALLPDRPAVRIEATVTLKGRTGVEMEALTAVSVAALTLYDMCKAVDRGMTIGGIRLLHKSGGKSGTYRAGDEA.

Residues 83–85 (LCH) and 121–122 (ME) each bind substrate. Residue D136 is part of the active site.

This sequence belongs to the MoaC family. In terms of assembly, homohexamer; trimer of dimers.

It carries out the reaction (8S)-3',8-cyclo-7,8-dihydroguanosine 5'-triphosphate = cyclic pyranopterin phosphate + diphosphate. The protein operates within cofactor biosynthesis; molybdopterin biosynthesis. In terms of biological role, catalyzes the conversion of (8S)-3',8-cyclo-7,8-dihydroguanosine 5'-triphosphate to cyclic pyranopterin monophosphate (cPMP). This chain is Cyclic pyranopterin monophosphate synthase, found in Rhodospirillum centenum (strain ATCC 51521 / SW).